A 428-amino-acid polypeptide reads, in one-letter code: Ectonucleoside triphosphate diphosphohydrolase 5 (428 aa).

The N-terminal stretch at 1-24 (MTSSRLPVLLALVFSSLSPVLSHS) is a signal peptide. The active-site Proton acceptor is Glu-172. Asn-232 is a glycosylation site (N-linked (GlcNAc...) asparagine). Cystine bridges form between Cys-272–Cys-303 and Cys-363–Cys-377.

The protein belongs to the GDA1/CD39 NTPase family. In terms of assembly, monomer; active form. Homodimer; disulfide-linked. Homodimers are enzymatically inactive. It depends on Ca(2+) as a cofactor. The cofactor is Mg(2+).

Its subcellular location is the endoplasmic reticulum. The protein resides in the secreted. It carries out the reaction a ribonucleoside 5'-diphosphate + H2O = a ribonucleoside 5'-phosphate + phosphate + H(+). The catalysed reaction is GDP + H2O = GMP + phosphate + H(+). It catalyses the reaction UDP + H2O = UMP + phosphate + H(+). The enzyme catalyses IDP + H2O = IMP + phosphate + H(+). It carries out the reaction CDP + H2O = CMP + phosphate + H(+). The catalysed reaction is ADP + H2O = AMP + phosphate + H(+). It participates in protein modification; protein glycosylation. Hydrolyzes nucleoside diphosphates with a preference for GDP, IDP and UDP compared to ADP and CDP. In the lumen of the endoplasmic reticulum, hydrolyzes UDP that acts as an end-product feedback inhibitor of the UDP-Glc:glycoprotein glucosyltransferases. UMP can be transported back by an UDP-sugar antiporter to the cytosol where it is consumed to regenerate UDP-glucose. Therefore, it positively regulates protein reglucosylation by clearing UDP from the ER lumen and by promoting the regeneration of UDP-glucose. Protein reglucosylation is essential to proper glycoprotein folding and quality control in the ER. This is Ectonucleoside triphosphate diphosphohydrolase 5 (ENTPD5) from Gallus gallus (Chicken).